A 913-amino-acid polypeptide reads, in one-letter code: SUN domain-containing protein 1 (913 aa).

Residues 1–139 (MDFSRLHTYT…VLRHPVLDES (139 aa)) are LMNA-binding. The Nuclear portion of the chain corresponds to 1–415 (MDFSRLHTYT…LTRCLRNICK (415 aa)). Ser-48 and Ser-66 each carry phosphoserine. Residues 69 to 81 (SQAIDSHISTSRA) show a composition bias toward polar residues. The disordered stretch occupies residues 69-120 (SQAIDSHISTSRATPAKGRETRTVKQRRSASKPAFSINHLSGKGLSSSTSHD). Residues 108-120 (LSGKGLSSSTSHD) show a composition bias toward low complexity. The residue at position 139 (Ser-139) is a Phosphoserine. The interval 209-302 (SRVYSRDRTL…MTAGELSRVD (94 aa)) is SYNE2-binding. The interval 223–302 (VSFYLDRTLW…MTAGELSRVD (80 aa)) is EMD-binding. The chain crosses the membrane as a helical span at residues 416–436 (VFVLLLPLLLLLGAGVSLWGQ). Over 437 to 913 (GNFFSLLPVL…RFRVHGEPIQ (477 aa)) the chain is Perinuclear space. Residues 456–485 (RVDDSKGMHRPGPLPPSPPPKVDHKASQWP) are disordered. Coiled coils occupy residues 491-533 (GQKV…EGLS) and 563-638 (HHDH…CEQA). Residues 703–913 (TSEAIVSAVN…RFRVHGEPIQ (211 aa)) form a sufficient for interaction with SYNE1 and SYNE2 region. The SUN domain occupies 751-912 (GGSILSTRCS…YRFRVHGEPI (162 aa)).

In terms of assembly, core component of the LINC complex which is composed of inner nuclear membrane SUN domain-containing proteins coupled to outer nuclear membrane KASH domain-containing nesprins. SUN and KASH domain-containing proteins seem to bind each other promiscuously; however, differentially expression of LINC complex constituents is giving rise to specific assemblies. At least SUN1/2-containing core LINC complexes are proposed to be hexameric composed of three protomers of each KASH and SUN domain-containing protein. Interacts with KASH5 (via the last 22 amino acids); this interaction mediates KASH5 telomere localization by forming a SUN1:KASH5 LINC complex. Isoform 5 is proposed to form a non-nuclear spermatogenesis-specific LINC complex with SYNE3 during sperm head formation. Interacts with SYNE2 and SYNE1; probably forming respective LINC complexes. Interacts with A-type lamin with a strong preference for unprocessed A-type lamin compared with the mature protein. Interaction with lamins B1 and C is hardly detectable. Interacts with NAT10. Interacts with EMD and TSNAX. Associates with the nuclear pore complex (NPC). Interacts with CCDC79/TERB1; promoting the accumulation of the LINC complex complexes at the telomere-nuclear envelope attachment sites. Interacts with IRAG2. Interacts (via KASH domain) with TMEM258. Post-translationally, the disulfide bond with KASH domain-containing nesprins is required for stability of the respective LINC complexes under tensile forces. As to expression, widely expressed. Expressed in cochlear outer hair cells (at protein level). Seven isoforms are expressed in testis including testis-specific isoform 5. Isoform 5 is the only isoform expressed at the end of sperm differentiation. Six isoforms are expressed in muscle, heart and brain, four isoforms in kidney and three isoforms in liver.

The protein resides in the nucleus inner membrane. Its subcellular location is the cytoplasmic vesicle. The protein localises to the secretory vesicle. It is found in the acrosome outer membrane. In terms of biological role, as a component of the LINC (LInker of Nucleoskeleton and Cytoskeleton) complex involved in the connection between the nuclear lamina and the cytoskeleton. The nucleocytoplasmic interactions established by the LINC complex play an important role in the transmission of mechanical forces across the nuclear envelope and in nuclear movement and positioning. Required for interkinetic nuclear migration (INM) and essential for nucleokinesis and centrosome-nucleus coupling during radial neuronal migration in the cerebral cortex and during glial migration. Involved in telomere attachment to nuclear envelope in the prophase of meiosis implicating a SUN1/2:KASH5 LINC complex in which SUN1 and SUN2 seem to act at least partial redundantly. Required for gametogenesis and involved in selective gene expression of coding and non-coding RNAs needed for gametogenesis. Helps to define the distribution of nuclear pore complexes (NPCs). Required for efficient localization of SYNE4 in the nuclear envelope. May be involved in nuclear remodeling during sperm head formation in spermatogenesis. May play a role in DNA repair by suppressing non-homologous end joining repair to facilitate the repair of DNA cross-links. Its function is as follows. Isoform 5 may be involved in nuclear remodeling during sperm head formation in spermatogenesis. A probable SUN1 isoform 5:SYNE3 LINC complex may tether spermatid nuclei to anterior cytoskeletal structures such as actin filaments present at membraneous junctions of spermatids and Sertoli cells. This is SUN domain-containing protein 1 from Mus musculus (Mouse).